Reading from the N-terminus, the 122-residue chain is Large ribosomal subunit protein bL12 (122 aa).

Belongs to the bacterial ribosomal protein bL12 family. In terms of assembly, homodimer. Part of the ribosomal stalk of the 50S ribosomal subunit. Forms a multimeric L10(L12)X complex, where L10 forms an elongated spine to which 2 to 4 L12 dimers bind in a sequential fashion. Binds GTP-bound translation factors.

Its function is as follows. Forms part of the ribosomal stalk which helps the ribosome interact with GTP-bound translation factors. Is thus essential for accurate translation. In Dichelobacter nodosus (strain VCS1703A), this protein is Large ribosomal subunit protein bL12.